Here is a 131-residue protein sequence, read N- to C-terminus: Large ribosomal subunit protein bL19 (131 aa).

It belongs to the bacterial ribosomal protein bL19 family.

Functionally, this protein is located at the 30S-50S ribosomal subunit interface and may play a role in the structure and function of the aminoacyl-tRNA binding site. The protein is Large ribosomal subunit protein bL19 of Anaeromyxobacter sp. (strain K).